A 418-amino-acid chain; its full sequence is Tyrosine--tRNA ligase (418 aa).

Tyr34 serves as a coordination point for L-tyrosine. A 'HIGH' region motif is present at residues 39-48 (PTADSLHLGH). Positions 169 and 173 each coordinate L-tyrosine. The 'KMSKS' region motif lies at 229–233 (KFGKS). Residue Lys232 coordinates ATP. The 67-residue stretch at 352–418 (HNIVEILVAA…GKKKYAVLTY (67 aa)) folds into the S4 RNA-binding domain.

This sequence belongs to the class-I aminoacyl-tRNA synthetase family. TyrS type 1 subfamily. In terms of assembly, homodimer.

It is found in the cytoplasm. It catalyses the reaction tRNA(Tyr) + L-tyrosine + ATP = L-tyrosyl-tRNA(Tyr) + AMP + diphosphate + H(+). Catalyzes the attachment of tyrosine to tRNA(Tyr) in a two-step reaction: tyrosine is first activated by ATP to form Tyr-AMP and then transferred to the acceptor end of tRNA(Tyr). This chain is Tyrosine--tRNA ligase, found in Streptococcus pyogenes serotype M49 (strain NZ131).